The primary structure comprises 1372 residues: DNA-directed RNA polymerase subunit beta' (1372 aa).

Positions 69, 71, 84, and 87 each coordinate Zn(2+). 3 residues coordinate Mg(2+): aspartate 460, aspartate 462, and aspartate 464. Cysteine 808, cysteine 882, cysteine 889, and cysteine 892 together coordinate Zn(2+).

Belongs to the RNA polymerase beta' chain family. In terms of assembly, the RNAP catalytic core consists of 2 alpha, 1 beta, 1 beta' and 1 omega subunit. When a sigma factor is associated with the core the holoenzyme is formed, which can initiate transcription. Mg(2+) serves as cofactor. The cofactor is Zn(2+).

It carries out the reaction RNA(n) + a ribonucleoside 5'-triphosphate = RNA(n+1) + diphosphate. DNA-dependent RNA polymerase catalyzes the transcription of DNA into RNA using the four ribonucleoside triphosphates as substrates. The sequence is that of DNA-directed RNA polymerase subunit beta' from Rickettsia akari (strain Hartford).